The sequence spans 657 residues: Keratinocyte proline-rich protein (657 aa).

Disordered regions lie at residues 285–320, 425–493, and 517–568; these read QGTY…SPPR, HPFP…PSPE, and QPVP…CGQP. Residues 292–302 are compositionally biased toward low complexity; sequence TSQRRSQSTSR. Basic and acidic residues predominate over residues 434 to 444; that stretch reads QHLDRSPESSR. The residue at position 442 (S442) is a Phosphoserine. 3 stretches are compositionally biased toward pro residues: residues 449-493, 517-530, and 539-561; these read VPAP…PSPE, QPVP…VPRP, and GPRP…PCSS.

The protein resides in the cytoplasm. This is Keratinocyte proline-rich protein from Mus musculus (Mouse).